The following is a 677-amino-acid chain: MLPSKIVRHKAGRFVPVLLAGLILAACSGQGPKSQSVDIQAPVTNNSAYYLQQVQQSSDDSKTDWQLLAIRALLKEGKYPQAAQAIGELPNQLSDKQQQELLLLKAQSLVAQQKIADAQPILSQVKTSELSQDQLARYYGLQIASAQGKTSLALLRAYIAQEPLLKGDERQQNIDATWQALTQLSQQDMNSLVINADENILQGWLDLLTAWHANAQDANMLKSAIKDWQTRYPDNPAAKTLPTQLSQVQNFTKASTSTIALLLPLNGQAQMFASAIQKGFNDAKNGTLATAPQATPGSAQDPIAINQQQPADANAVVSPSANPAAAQQSGTAQQPATTQQQPQQQPAAEPASNAQVKVYDTSSQPIAQVMQQAQQDGATLVVGPLLKNNVETVANSQTPLNVLALNEPEQIQNHPNMCYFALSPEDEARDAAHHIWDQGKRQPLLLVPRNGLGDRVTAAFTKEWQSLGGGTVLQQRFGSVSELKQGINSGAGISMSGTPVVMPSSSQPQSVSVAGLNIPAPQTSAPAASSGGAIDAAYIVSTQDELQLIKPMISMRTGSRSNVALYASSRSAQAGAGPDFRLEMEGLQFSDIPLLSGANPALMQQAAKSFNNDYSLVRLYAMGIDAWTLSNHFNQMRQVPGFSLDGNTGKLSATADCVINRKLTWNQYRQGNIVPAS.

The first 26 residues, 1 to 26 (MLPSKIVRHKAGRFVPVLLAGLILAA), serve as a signal peptide directing secretion. Residue Cys27 is the site of N-palmitoyl cysteine attachment. Cys27 carries S-diacylglycerol cysteine lipidation. Positions 309–359 (QPADANAVVSPSANPAAAQQSGTAQQPATTQQQPQQQPAAEPASNAQVKVY) are disordered. Over residues 313 to 355 (ANAVVSPSANPAAAQQSGTAQQPATTQQQPQQQPAAEPASNAQ) the composition is skewed to low complexity.

Belongs to the LpoA family. In terms of assembly, interacts with PBP1a.

The protein localises to the cell outer membrane. Regulator of peptidoglycan synthesis that is essential for the function of penicillin-binding protein 1A (PBP1a). The sequence is that of Penicillin-binding protein activator LpoA from Pantoea ananatis (strain LMG 20103).